We begin with the raw amino-acid sequence, 1138 residues long: MVKLSIVLTPQFLSHDQGQLTKELQQHVKSVTCPCEYLRKVINTLADHHHRGTDFGGSPWLHVIIAFPTSYKVVITLWIVYLWVSLLKTIFWSRNGHDGSTDVQQRAWRSNRRRQEGLRSICMHTKKRVSSFRGNKIGLKDVITLRRHVETKVRAKIRKRKVTTKINHHDKINGKRKTARKQKMFQRAQELRRRAEDYHKCKIPPSARKALCNWVRMAAAEHRHSSGLPYWPYLTAETLKNRMGHQPPPPTQQHSITDNSLSLKTPPECVLTPLPPSADDNLKTPPECVLTPLPPSADDNLKTPPECLLTPLPPSADDNLKTPPECLLTPLPPSADDNLKTPPECLLTPLPPSAPPSAPPSADDNLKTRAECLLHPLPPSADDNLKTPSERQLTPLPPSAPPSADDNIKTPAERLRGPLPPSADDNLKTPSERQLTPLPPSAPPSADDNIKTPAERLRGPLPPSADDNLKTPSERQLTPLPPSAPPSADDNIKTPAERLRGPLPPSADDNLKTPSERQLTPLPPSAPPSADDNIKTPAERLRGPLPPSADDNLKTPSERQLTPLPPSAPPSADDNIKTPAFHPQRMIISRHLPSVSSLPFHPQLHSQQMIISRYLLSVCGFRFHHQPMIISRHLPSVSSLPFHPQLHPQQMIISRHLPSVCGGRFHPQRMIISRHLPSVSSLPFHPQLHPQQMIISRHLPSVCGGRFHPQRMIISRHLPSVSSLPFHPQLHPQQMIISRHLPSVCGERLRGPLPPSADDNLKTPSERQLTPLPPSAPPSADDNIKTPAERLRRPLPPSADDNLKTPSERQLTPLPPSAPPSADDNIKTPAERLRGPLPPSADDNLKTPSERQLTPLPPSAPPSADDNIKTPAERLRGPLPPSADDNLKTPSERQLTPLPPSAPPSADDNIKTPAERLRGPLPPSADDNLKTPSERQLTPLPPSAPPSADDNIKTPAERLRGPLPPSADDNLKTPSERQLTPLPPSAPPSADDNIKTPAERLRGPLPPSADDNLKTPPLATQEAEAEKPRKPKRQRAAEMEPPPEPKRRRVGDVEPSRKPKRRRAADVEPSSPKPKRRRVGDVEPSRKPKRRRAADVEPSSPEPKRRRVGDVEPSRKPKRRRAADVEPSSPEPKRRRLS.

Residues 73-93 (VVITLWIVYLWVSLLKTIFWS) form a helical membrane-spanning segment. 2 disordered regions span residues 242 to 578 (RMGH…NIKT) and 747 to 1138 (ERLR…RRLS). The span at 252–263 (QQHSITDNSLSL) shows a compositional bias: polar residues. Residues 349-359 (PLPPSAPPSAP) show a composition bias toward pro residues. Basic and acidic residues-rich tracts occupy residues 406–416 (DNIKTPAERLR), 448–458 (DNIKTPAERLR), 490–500 (DNIKTPAERLR), 532–542 (DNIKTPAERLR), 782–792 (DNIKTPAERLR), 824–834 (DNIKTPAERLR), 866–876 (DNIKTPAERLR), 908–918 (DNIKTPAERLR), 950–960 (DNIKTPAERLR), and 992–1002 (DNIKTPAERLR).

It belongs to the NPIP family.

It localises to the membrane. In Homo sapiens (Human), this protein is Nuclear pore complex-interacting protein family member B13.